A 278-amino-acid polypeptide reads, in one-letter code: Bifunctional protein FolD (278 aa).

NADP(+) is bound by residues 165-167 (GRS), Ser-190, and Thr-231.

The protein belongs to the tetrahydrofolate dehydrogenase/cyclohydrolase family. Homodimer.

It carries out the reaction (6R)-5,10-methylene-5,6,7,8-tetrahydrofolate + NADP(+) = (6R)-5,10-methenyltetrahydrofolate + NADPH. The catalysed reaction is (6R)-5,10-methenyltetrahydrofolate + H2O = (6R)-10-formyltetrahydrofolate + H(+). Its pathway is one-carbon metabolism; tetrahydrofolate interconversion. Functionally, catalyzes the oxidation of 5,10-methylenetetrahydrofolate to 5,10-methenyltetrahydrofolate and then the hydrolysis of 5,10-methenyltetrahydrofolate to 10-formyltetrahydrofolate. The sequence is that of Bifunctional protein FolD from Clostridium novyi (strain NT).